Reading from the N-terminus, the 100-residue chain is Acylphosphatase (100 aa).

Positions 3–92 (RRSYSVIGRV…PLPDTFDIRF (90 aa)) constitute an Acylphosphatase-like domain. Residues R18 and N36 contribute to the active site. The disordered stretch occupies residues 76 to 100 (DDPAHEGPLPDTFDIRFRAPGSASE).

Belongs to the acylphosphatase family.

It carries out the reaction an acyl phosphate + H2O = a carboxylate + phosphate + H(+). The sequence is that of Acylphosphatase (acyP) from Nitratidesulfovibrio vulgaris (strain ATCC 29579 / DSM 644 / CCUG 34227 / NCIMB 8303 / VKM B-1760 / Hildenborough) (Desulfovibrio vulgaris).